The chain runs to 963 residues: MSPNVQKRPSSEDIKTQEFYDSTRNIRRVATAIGSINANLESPQLYSLAKSTSLQEPVRIYGDSVSPAISSSKAHSTSSVSPYYSEKNESQALNADGTAFANPSFHSFGLPQEDSQDNTQTYSTPYTTMNPSNEMHPYPPATFENNYSVLPDHSSQPNAYSFTGSNILPTQSPSLNQMQDYQNLQQNGSSNTTIPSFSSQHDLSQGLTHQPVPNHDEYAFSYPYELQRKPLIPAHPVPSFRPTSALKVNMNSNVPSSDSVRNSSPNQYYASTSKQSIPSQSQNLQPPQKASVLGTVNNYRQYQNSFISLNDYQAAQSNISSPSSRFPTPYSPSVPFGTYQEKEKSYSQDHAELSYYQQSPSMMPPYDRSSVYFQQPLSRTDVPNQSFQQYPTTVDGGSMIPNLYPTSAEQMGLYPQDSQNKDTYPKSLVNRPSSAVCEPARNDSIPMMVYSQPVTIEQRIQYVLSNCHCLSAFYLCMPSLCQKSYGTERRYLCPPIVLYLLGTTWLNNVTDNLKISAQTLEDKDNPKFAKNIFYYNADGALISPETDIAKSTYQLTNYNENTNFDSFPVWGNALLKTIYYTGQGKNDGFGRSTFLQLSVQSKTKYFKLENLRLGVISKPSQKRALMKVSDMSIRHGDCVCLFNRYRAQHNNALFLGTSNVQRAISKVSLNMKYNSNYFPTTDAPNDAENEGAGLAMANNLWEPFYIFSVDELNKGNNSNPSDSRSKVLCSNMVIILVSKITGVQSPPLILKKHDNWKVSLSSRAPSEAINCLSKLAFQCHETKRFLYIDEKQSSEISFTSGELEYSDPNDPTKATHSVLPWSAMWSIISTQSVRTMFYNEPIHQNAFHVVPSMPFVKFIRLDENSMFHIYGTGFANDVQIWMAYTRCEVKSINAFKPDTTLPPDIISDSRFSSRVYACTANLIELICEIPVCMFEPTVELSPILLFQYETLFHSGYKWPLESH.

Disordered stretches follow at residues 130–207 (NPSN…SQGL) and 248–289 (VNMN…PPQK). 2 stretches are compositionally biased toward polar residues: residues 143–207 (FENN…SQGL) and 249–289 (NMNS…PPQK).

Belongs to the Su(H) family.

The protein resides in the nucleus. Its function is as follows. Transcription factor which function may be to trigger the increase of adhesion at stationary phase, possibly by counteracting or replacing cbf11 at the respective promoters. May also play a cbf11-antagonistic role in the regulation of a number of other important processes such as extracellular material production, colony morphogenesis, ploidy maintenance, or meiosis. The chain is Transcription factor cbf12 (cbf12) from Schizosaccharomyces pombe (strain 972 / ATCC 24843) (Fission yeast).